A 274-amino-acid chain; its full sequence is Large ribosomal subunit protein uL2cz/uL2cy (274 aa).

Disordered regions lie at residues 1–23 (MAIHLYKTSTPSTRNRAVDSQVK) and 224–274 (NPVD…RRSK).

The protein belongs to the universal ribosomal protein uL2 family. In terms of assembly, part of the 50S ribosomal subunit.

Its subcellular location is the plastid. It localises to the chloroplast. The sequence is that of Large ribosomal subunit protein uL2cz/uL2cy (rpl2-A) from Vitis vinifera (Grape).